We begin with the raw amino-acid sequence, 270 residues long: Flavodoxin/ferredoxin--NADP reductase (270 aa).

In terms of domain architecture, FAD-binding FR-type spans 12–113; the sequence is VLPDAQTVTS…PKPVGTLVID (102 aa). FAD is bound by residues 62–65, 78–80, and 86–88; these read RAYS, YSI, and PLT. Threonine 126 is an NADP(+) binding site. Position 128 (threonine 128) interacts with FAD. Residues arginine 156, 192 to 193, arginine 201, and aspartate 238 each bind NADP(+); that span reads TR. FAD is bound at residue 264–270; the sequence is AFVGEGI.

It belongs to the ferredoxin--NADP reductase type 1 family. As to quaternary structure, monomer. It depends on FAD as a cofactor.

The protein resides in the cytoplasm. It catalyses the reaction 2 reduced [2Fe-2S]-[ferredoxin] + NADP(+) + H(+) = 2 oxidized [2Fe-2S]-[ferredoxin] + NADPH. It carries out the reaction reduced [flavodoxin] + NADP(+) = oxidized [flavodoxin] + NADPH + 2 H(+). Transports electrons between flavodoxin or ferredoxin and NADPH. The sequence is that of Flavodoxin/ferredoxin--NADP reductase from Rhodobacter capsulatus (Rhodopseudomonas capsulata).